We begin with the raw amino-acid sequence, 381 residues long: Chaperone protein DnaJ (381 aa).

The 66-residue stretch at 5–70 (DFYEVLGVSR…QKKAAYDQYG (66 aa)) folds into the J domain. The CR-type zinc finger occupies 136-214 (GVTKEIEVPT…CHGQGRKQKT (79 aa)). Zn(2+) is bound by residues Cys149, Cys152, Cys166, Cys169, Cys188, Cys191, Cys202, and Cys205. CXXCXGXG motif repeat units lie at residues 149-156 (CDSCDGSG), 166-173 (CGTCHGHG), 188-195 (CPTCHGKG), and 202-209 (CNECHGQG).

It belongs to the DnaJ family. In terms of assembly, homodimer. It depends on Zn(2+) as a cofactor.

It localises to the cytoplasm. In terms of biological role, participates actively in the response to hyperosmotic and heat shock by preventing the aggregation of stress-denatured proteins and by disaggregating proteins, also in an autonomous, DnaK-independent fashion. Unfolded proteins bind initially to DnaJ; upon interaction with the DnaJ-bound protein, DnaK hydrolyzes its bound ATP, resulting in the formation of a stable complex. GrpE releases ADP from DnaK; ATP binding to DnaK triggers the release of the substrate protein, thus completing the reaction cycle. Several rounds of ATP-dependent interactions between DnaJ, DnaK and GrpE are required for fully efficient folding. Also involved, together with DnaK and GrpE, in the DNA replication of plasmids through activation of initiation proteins. In Vibrio parahaemolyticus serotype O3:K6 (strain RIMD 2210633), this protein is Chaperone protein DnaJ.